Reading from the N-terminus, the 172-residue chain is Centrin-2 (172 aa).

A compositionally biased stretch (polar residues) spans 1 to 14 (MASNFKKTTMASSA). The segment at 1–31 (MASNFKKTTMASSAQRKRMSPKPELTEDQKQ) is disordered. At Ala2 the chain carries N-acetylalanine. The tract at residues 2–25 (ASNFKKTTMASSAQRKRMSPKPEL) is required for self-assembly. Ser20 bears the Phosphoserine mark. Lys22 is covalently cross-linked (Glycyl lysine isopeptide (Lys-Gly) (interchain with G-Cter in SUMO2)). At Thr26 the chain carries Phosphothreonine. EF-hand domains lie at 28 to 63 (DQKQEIREAFDLFDADGTGTIDIKELKVAMRALGFE), 64 to 99 (PKKEEIKKMISEIDKEGTGKMNFSDFLTVMTQKMSE), 101 to 136 (DTKEEILKAFKLFDDDETGKISFKNLKRVAKELGEN), and 137 to 172 (LTDEELQEMIDEADRDGDGEVNEQEFLRIMKKTSLY). Ca(2+) is bound by residues Asp41, Asp43, Thr45, Thr47, and Glu52. 5 residues coordinate Ca(2+): Asp150, Asp152, Asp154, Glu156, and Glu161.

It belongs to the centrin family. As to quaternary structure, monomer. Homooligomer. Interacts with CCP110, SFI1. Component of the XPC complex composed of XPC, RAD23B and CETN2. Component of the nuclear pore complex (NPC)-associated TREX-2 complex (transcription and export complex 2), composed of at least GANP, 2 copies of ENY2, PCID2, SEM1/DSS1, and either centrin CETN2 or centrin CETN3. The TREX-2 complex also associates with ALYREF/ALY and with the nucleoporin NUP153. Interacts with USP49. Forms a microtubule-associated complex with POC5, POC1B and FAM161A. Interacts with CCDC15. As to expression, ubiquitously expressed in all adult tissues tested, with strongest expression in brain, spleen, kidney, small intestine and ovary. Also expressed in the NIH 3T3 fibroblast cell line and peripheral blood lymphocytes.

Its subcellular location is the cytoplasm. The protein localises to the cytoskeleton. The protein resides in the microtubule organizing center. It is found in the centrosome. It localises to the centriole. Its subcellular location is the nucleus. The protein localises to the nucleus envelope. The protein resides in the nuclear pore complex. In terms of biological role, plays a fundamental role in microtubule organizing center structure and function. Required for centriole duplication and correct spindle formation. Has a role in regulating cytokinesis and genome stability via cooperation with CALM1 and CCP110. Involved in global genome nucleotide excision repair (GG-NER) by acting as component of the XPC complex. Cooperatively with Rad23b appears to stabilize Xpc. In vitro, stimulates DNA binding of the Xpc:Rad23b dimer. Its function is as follows. The XPC complex is proposed to represent the first factor bound at the sites of DNA damage and together with other core recognition factors, Xpa, RPA and the TFIIH complex, is part of the pre-incision (or initial recognition) complex. The XPC complex recognizes a wide spectrum of damaged DNA characterized by distortions of the DNA helix such as single-stranded loops, mismatched bubbles or single-stranded overhangs. The orientation of XPC complex binding appears to be crucial for inducing a productive NER. XPC complex is proposed to recognize and to interact with unpaired bases on the undamaged DNA strand which is followed by recruitment of the TFIIH complex and subsequent scanning for lesions in the opposite strand in a 5'-to-3' direction by the NER machinery. Cyclobutane pyrimidine dimers (CPDs) which are formed upon UV-induced DNA damage esacpe detection by the XPC complex due to a low degree of structural perurbation. Instead they are detected by the UV-DDB complex which in turn recruits and cooperates with the XPC complex in the respective DNA repair. Functionally, as a component of the TREX-2 complex, involved in the export of mRNAs to the cytoplasm through the nuclear pores. The sequence is that of Centrin-2 (Cetn2) from Mus musculus (Mouse).